A 319-amino-acid chain; its full sequence is Coproporphyrin III ferrochelatase (319 aa).

Fe(2+) contacts are provided by His-193 and Glu-274.

This sequence belongs to the ferrochelatase family.

The protein resides in the cytoplasm. The catalysed reaction is Fe-coproporphyrin III + 2 H(+) = coproporphyrin III + Fe(2+). It functions in the pathway porphyrin-containing compound metabolism; protoheme biosynthesis. Involved in coproporphyrin-dependent heme b biosynthesis. Catalyzes the insertion of ferrous iron into coproporphyrin III to form Fe-coproporphyrin III. The polypeptide is Coproporphyrin III ferrochelatase (Streptococcus mutans serotype c (strain ATCC 700610 / UA159)).